The primary structure comprises 222 residues: Tegument protein UL26 (222 aa).

It belongs to the herpesviridae US22 family. In terms of assembly, interacts with UL25. Interacts with ISGylation machinery components ISG15, UBA7 and HERC5; these interactions inhibit global protein ISGylation. In terms of processing, ISGylated; ISGylation regulates UL26 stability and inhibits its activities to suppress NF-kappa-B signaling.

The protein localises to the virion tegument. It is found in the host nucleus. Its function is as follows. Plays a role in the inhibition of host NF-kappa-B. This inhibition affects both the canonical and the non-canonical pathways. Blocks the induction of host IKK phosphorylation. May also influence the normal phosphorylation state of several tegument proteins including pp28 in virions. Also suppresses virus-induced ISGylation independent of its own ISGylation. The chain is Tegument protein UL26 (UL26) from Homo sapiens (Human).